Consider the following 513-residue polypeptide: Transmembrane protein 151B (513 aa).

Positions 1–29 (MSPAAPVTESSAAEVHREQTDAPREPQRP) are disordered. Over residues 14-28 (EVHREQTDAPREPQR) the composition is skewed to basic and acidic residues. Helical transmembrane passes span 46-66 (CLLL…CQVT), 93-113 (YIYI…VECW), and 274-294 (LPWY…LSWP). N-linked (GlcNAc...) asparagine glycosylation is found at Asn-366, Asn-418, and Asn-505.

The protein belongs to the TMEM151 family.

Its subcellular location is the membrane. The protein is Transmembrane protein 151B (tmem151b) of Danio rerio (Zebrafish).